The sequence spans 1195 residues: Probable beta-tubulin polyglutamylase (1195 aa).

The segment at 1 to 110 is disordered; that stretch reads MSQKDIYNKY…QTEMTDNQNE (110 aa). Composition is skewed to acidic residues over residues 17 to 27 and 44 to 79; these read DQQEEDDDENQ and QGED…EENN. Coiled coils occupy residues 59–103 and 144–260; these read DEEQ…QQTE and QDMD…QSEQ. The segment covering 80–89 has biased composition (low complexity); it reads QDQQNNSESN. Polar residues predominate over residues 90 to 110; the sequence is LQYDKTNQKNQQTEMTDNQNE. The tract at residues 281 to 343 is disordered; that stretch reads PKNDVDQYTG…NKKEQAKKQQ (63 aa). Residues 294–316 show a composition bias toward acidic residues; the sequence is DSGESDEEANNEDDDEDEDDESE. Residues 322–334 are compositionally biased toward basic residues; that stretch reads RKNKAQLLKKKNN. Residues 350 to 703 enclose the TTL domain; sequence KQTLVLNVAD…TCKAKNEIIN (354 aa). Residues 500 to 503, lysine 513, and aspartate 515 each bind ATP; that span reads QRYL. The segment at 674–756 is c-MTBD region; the sequence is PLDSYIKKNT…GFERIFPMED (83 aa). A disordered region spans residues 783-862; it reads RNTKKVTEDP…ETIQCEDQEQ (80 aa). The segment covering 825-849 has biased composition (polar residues); sequence PNSQTTINKGIPGQNGQRPSSSQLN. A compositionally biased stretch (acidic residues) spans 850-860; it reads EEGETIQCEDQ.

Its subcellular location is the cytoplasm. The protein resides in the cytoskeleton. It localises to the cell projection. The protein localises to the cilium. It is found in the cilium basal body. Its function is as follows. Probable tubulin polyglutamylase with a strong preference for beta-tubulin. In Tetrahymena thermophila (strain SB210), this protein is Probable beta-tubulin polyglutamylase (Ttll6a).